The sequence spans 400 residues: Elongation factor Tu (400 aa).

One can recognise a tr-type G domain in the interval 10 to 209 (KPHVNVGTIG…AVDSYIPTPE (200 aa)). The tract at residues 19–26 (GHVDHGKT) is G1. 19–26 (GHVDHGKT) is a binding site for GTP. Thr-26 serves as a coordination point for Mg(2+). The tract at residues 60-64 (GITIA) is G2. Residues 81–84 (DCPG) are G3. GTP is bound by residues 81–85 (DCPGH) and 136–139 (NKVD). Positions 136 to 139 (NKVD) are G4. The segment at 174–176 (SAL) is G5.

This sequence belongs to the TRAFAC class translation factor GTPase superfamily. Classic translation factor GTPase family. EF-Tu/EF-1A subfamily. In terms of assembly, monomer.

It localises to the cytoplasm. It catalyses the reaction GTP + H2O = GDP + phosphate + H(+). Its function is as follows. GTP hydrolase that promotes the GTP-dependent binding of aminoacyl-tRNA to the A-site of ribosomes during protein biosynthesis. In Moorella thermoacetica (strain ATCC 39073 / JCM 9320), this protein is Elongation factor Tu.